The primary structure comprises 524 residues: Alkaline phosphatase, tissue-nonspecific isozyme (524 aa).

An N-terminal signal peptide occupies residues 1 to 17 (MISPFLVLAIGTCLTNS). D60 is a binding site for Mg(2+). Zn(2+) is bound by residues D60 and S110. The active-site Phosphoserine intermediate is the S110. Residue S110 is modified to Phosphoserine. A disulfide bond links C139 and C201. N140 carries an N-linked (GlcNAc...) asparagine glycan. T173 contacts Mg(2+). The N-linked (GlcNAc...) asparagine glycan is linked to N230. Residue E235 coordinates Ca(2+). N-linked (GlcNAc...) asparagine glycosylation is present at N271. 2 residues coordinate Ca(2+): F290 and E291. N-linked (GlcNAc...) asparagine glycosylation occurs at N302. D306 is a binding site for Ca(2+). E332 contacts Mg(2+). 4 residues coordinate Zn(2+): D337, H341, D378, and H379. N430 is a glycosylation site (N-linked (GlcNAc...) asparagine). Zn(2+) is bound at residue H454. An intrachain disulfide couples C489 to C497. A lipid anchor (GPI-anchor amidated serine) is attached at S499. Positions 500–524 (ASSAGGPSPGPLFLLLALPSLGILF) are cleaved as a propeptide — removed in mature form.

The protein belongs to the alkaline phosphatase family. Homodimer. The cofactor is Mg(2+). Requires Zn(2+) as cofactor. Ca(2+) is required as a cofactor. N-glycosylated.

The protein localises to the cell membrane. Its subcellular location is the extracellular vesicle membrane. It is found in the mitochondrion membrane. The protein resides in the mitochondrion intermembrane space. The catalysed reaction is a phosphate monoester + H2O = an alcohol + phosphate. It catalyses the reaction diphosphate + H2O = 2 phosphate + H(+). The enzyme catalyses pyridoxal 5'-phosphate + H2O = pyridoxal + phosphate. It carries out the reaction phosphoethanolamine + H2O = ethanolamine + phosphate. The catalysed reaction is N-phosphocreatine + H2O = creatine + phosphate. It catalyses the reaction ATP + H2O = ADP + phosphate + H(+). The enzyme catalyses ADP + H2O = AMP + phosphate + H(+). It carries out the reaction AMP + H2O = adenosine + phosphate. Phosphatase activity is specifically inhibited by 5-((5-chloro-2-methoxyphenyl)sulfonamido)nicotinamide (SBI-425). Functionally, alkaline phosphatase that metabolizes various phosphate compounds and plays a key role in skeletal mineralization and adaptive thermogenesis. Has broad substrate specificity and can hydrolyze a considerable variety of compounds: however, only a few substrates, such as diphosphate (inorganic pyrophosphate; PPi), pyridoxal 5'-phosphate (PLP) and N-phosphocreatine are natural substrates. Plays an essential role in skeletal and dental mineralization via its ability to hydrolyze extracellular diphosphate, a potent mineralization inhibitor, to phosphate: it thereby promotes hydroxyapatite crystal formation and increases inorganic phosphate concentration. Acts in a non-redundant manner with PHOSPHO1 in skeletal mineralization: while PHOSPHO1 mediates the initiation of hydroxyapatite crystallization in the matrix vesicles (MVs), ALPL/TNAP catalyzes the spread of hydroxyapatite crystallization in the extracellular matrix. Also promotes dephosphorylation of osteopontin (SSP1), an inhibitor of hydroxyapatite crystallization in its phosphorylated state; it is however unclear whether ALPL/TNAP mediates SSP1 dephosphorylation via a direct or indirect manner. Catalyzes dephosphorylation of PLP to pyridoxal (PL), the transportable form of vitamin B6, in order to provide a sufficient amount of PLP in the brain, an essential cofactor for enzymes catalyzing the synthesis of diverse neurotransmitters. Additionally, also able to mediate ATP degradation in a stepwise manner to adenosine, thereby regulating the availability of ligands for purinergic receptors. Also capable of dephosphorylating microbial products, such as lipopolysaccharides (LPS) as well as other phosphorylated small-molecules, such as poly-inosine:cytosine (poly I:C). Acts as a key regulator of adaptive thermogenesis as part of the futile creatine cycle: localizes to the mitochondria of thermogenic fat cells and acts by mediating hydrolysis of N-phosphocreatine to initiate a futile cycle of creatine dephosphorylation and phosphorylation. During the futile creatine cycle, creatine and N-phosphocreatine are in a futile cycle, which dissipates the high energy charge of N-phosphocreatine as heat without performing any mechanical or chemical work. This is Alkaline phosphatase, tissue-nonspecific isozyme (ALPL) from Felis catus (Cat).